A 337-amino-acid polypeptide reads, in one-letter code: Basic membrane protein A1 (337 aa).

An N-terminal signal peptide occupies residues 1–17 (MNKLLLLILFECIIFLS). Residue cysteine 18 is the site of N-palmitoyl cysteine attachment. Cysteine 18 carries S-diacylglycerol cysteine lipidation.

The protein belongs to the BMP lipoprotein family. Monomer.

Its subcellular location is the cell inner membrane. In terms of biological role, immunogenic protein. May be part of an ABC-type nucleoside uptake system involved in the purine salvage pathway. The sequence is that of Basic membrane protein A1 (bmpA1) from Borrelia garinii subsp. bavariensis (strain ATCC BAA-2496 / DSM 23469 / PBi) (Borreliella bavariensis).